The following is a 427-amino-acid chain: MNILKSKELFKEAQNYLVGGVNSPVRAFKAVGTDPIFIQRGKGSRIWDVDGNEYIDYVLSWGPLILGHAHDQVVNAIKQVANYGTSFGAPTELEIEMAKAVVDAVKSVEMVRFVNSGTEATMSAIRLARGYTKRKKIVKFDGCYHGHGDSLLVSAGSGVATLGIPGTPGIPEELANLTIVLPYNDIEAVEEAFKRYGEDIACVIIEPVAGNMGVVAPSKEYHQRLRDITRKYGALLIFDEVMTGFRLAYGGAQELYGIDPDLTTFGKVIGGGLPVGAYGGKREIMEYVAPVGPVYQAGTLSGNPLAMAAGLRQLQLLKELNPYRELDEKGRFLEEGFKQIAQEFSAAIQVNRVGSMITVFFTDIPVKDFATAKTSDTNKFAKFFRCMLEKGIYLPASQFEAFFLSTAHSQKDLEETLEKARECFKIL.

Lysine 267 carries the post-translational modification N6-(pyridoxal phosphate)lysine.

Belongs to the class-III pyridoxal-phosphate-dependent aminotransferase family. HemL subfamily. In terms of assembly, homodimer. It depends on pyridoxal 5'-phosphate as a cofactor.

It localises to the cytoplasm. It catalyses the reaction (S)-4-amino-5-oxopentanoate = 5-aminolevulinate. The protein operates within porphyrin-containing compound metabolism; protoporphyrin-IX biosynthesis; 5-aminolevulinate from L-glutamyl-tRNA(Glu): step 2/2. This chain is Glutamate-1-semialdehyde 2,1-aminomutase, found in Sulfurihydrogenibium azorense (strain DSM 15241 / OCM 825 / Az-Fu1).